The sequence spans 256 residues: Hemin import ATP-binding protein HmuV (256 aa).

Positions I2 to D238 constitute an ABC transporter domain. Residue G34–S41 coordinates ATP.

Belongs to the ABC transporter superfamily. Heme (hemin) importer (TC 3.A.1.14.5) family. The complex is composed of two ATP-binding proteins (HmuV), two transmembrane proteins (HmuU) and a solute-binding protein (HmuT).

The protein resides in the cell inner membrane. In terms of biological role, part of the ABC transporter complex HmuTUV involved in hemin import. Responsible for energy coupling to the transport system. The chain is Hemin import ATP-binding protein HmuV from Shigella dysenteriae serotype 1 (strain Sd197).